A 682-amino-acid chain; its full sequence is Methionine--tRNA ligase (682 aa).

Positions 14–24 (PYANGSIHLGH) match the 'HIGH' region motif. Zn(2+) is bound by residues Cys145, Cys148, Cys158, and Cys161. The 'KMSKS' region motif lies at 331–335 (KMSKS). ATP is bound at residue Lys334. Residues 580 to 682 (AFAAIDLRVA…SGARPGQRIK (103 aa)) enclose the tRNA-binding domain.

Belongs to the class-I aminoacyl-tRNA synthetase family. MetG type 1 subfamily. Homodimer. Zn(2+) is required as a cofactor.

Its subcellular location is the cytoplasm. It catalyses the reaction tRNA(Met) + L-methionine + ATP = L-methionyl-tRNA(Met) + AMP + diphosphate. Is required not only for elongation of protein synthesis but also for the initiation of all mRNA translation through initiator tRNA(fMet) aminoacylation. This chain is Methionine--tRNA ligase, found in Pseudomonas syringae pv. syringae (strain B728a).